We begin with the raw amino-acid sequence, 616 residues long: Chaperone protein HscA (616 aa).

This sequence belongs to the heat shock protein 70 family.

Chaperone involved in the maturation of iron-sulfur cluster-containing proteins. Has a low intrinsic ATPase activity which is markedly stimulated by HscB. Involved in the maturation of IscU. The chain is Chaperone protein HscA from Escherichia coli O139:H28 (strain E24377A / ETEC).